Here is a 444-residue protein sequence, read N- to C-terminus: 3-phosphoshikimate 1-carboxyvinyltransferase (444 aa).

3 residues coordinate 3-phosphoshikimate: lysine 24, serine 25, and arginine 29. Lysine 24 contacts phosphoenolpyruvate. Positions 97 and 125 each coordinate phosphoenolpyruvate. Positions 170, 172, 318, and 345 each coordinate 3-phosphoshikimate. Residue glutamine 172 participates in phosphoenolpyruvate binding. Aspartate 318 functions as the Proton acceptor in the catalytic mechanism. The phosphoenolpyruvate site is built by arginine 349 and arginine 391.

Belongs to the EPSP synthase family. In terms of assembly, monomer.

It is found in the cytoplasm. The catalysed reaction is 3-phosphoshikimate + phosphoenolpyruvate = 5-O-(1-carboxyvinyl)-3-phosphoshikimate + phosphate. It participates in metabolic intermediate biosynthesis; chorismate biosynthesis; chorismate from D-erythrose 4-phosphate and phosphoenolpyruvate: step 6/7. Functionally, catalyzes the transfer of the enolpyruvyl moiety of phosphoenolpyruvate (PEP) to the 5-hydroxyl of shikimate-3-phosphate (S3P) to produce enolpyruvyl shikimate-3-phosphate and inorganic phosphate. The sequence is that of 3-phosphoshikimate 1-carboxyvinyltransferase from Halorhodospira halophila (strain DSM 244 / SL1) (Ectothiorhodospira halophila (strain DSM 244 / SL1)).